The following is a 784-amino-acid chain: Cadherin-5 (784 aa).

A signal peptide spans 1–24 (MQRLTELATALGAFLGLLAVAAMA). Residues 25–45 (GPNFPQIDTPNMLPAHHRQKR) constitute a propeptide that is removed on maturation. 5 consecutive Cadherin domains span residues 46–149 (DWIW…WPVF), 150–256 (SHQV…FPVF), 257–371 (TQST…PPVF), 372–476 (QRHF…DNPP), and 477–593 (EFAQ…MAAQ). At 46–599 (DWIWNQMHID…MAAQAGVSIQ (554 aa)) the chain is on the extracellular side. Residues Glu56 and Glu57 each contribute to the Ca(2+) site. N-linked (GlcNAc...) asparagine glycosylation is present at Asn59. Asp107, Glu109, Asp141, Ile142, Asn143, Asp144, and Asn145 together coordinate Ca(2+). Asn155 carries an N-linked (GlcNAc...) asparagine glycan. Ca(2+) contacts are provided by Asp175, Asp177, His184, and Asp229. Residues Asn441, Asn523, and Asn535 are each glycosylated (N-linked (GlcNAc...) asparagine). A helical membrane pass occupies residues 600 to 620 (ALVAIFLCILTITVITLLIIL). The tract at residues 621–660 (RRRIRKQAHAHSKSALEIHEQLVTYDEEGGGEMDTTSYDV) is required for interaction with PALS1. Residues 621-784 (RRRIRKQAHA…GSDPQEELII (164 aa)) are Cytoplasmic-facing.

Part of a complex composed of AMOTL2, MAGI1 and CDH5, within the complex AMOTL2 acts as a scaffold protein for the interaction of MAGI1 with CDH5. The complex is required for coupling actin fibers to cell junctions in endothelial cells. Within the complex AMOTL2 (via its N-terminus) interacts with CDH5. Interacts (via cadherin 5 domain) with PTPRB. Interacts with TRPC4. Interacts with KRIT1. Interacts with PARD3. Interacts with RTN4 (isoform B). Interacts with PALS1; the interaction promotes PALS1 localization to cell junctions and is required for CDH5-mediated vascular lumen formation and endothelial cell polarity. Interacts with CTNND1/p120-catenin; the interaction controls CADH5 endocytosis. Phosphorylated on tyrosine residues by KDR/VEGFR-2. Dephosphorylated by PTPRB. Post-translationally, O-glycosylated. Expressed in postnatal endothelial cells of the retinal vascular plexus (at protein level).

It is found in the cell junction. The protein localises to the adherens junction. Its subcellular location is the cell membrane. The protein resides in the cytoplasm. In terms of biological role, cadherins are calcium-dependent cell adhesion proteins. They preferentially interact with themselves in a homophilic manner in connecting cells; cadherins may thus contribute to the sorting of heterogeneous cell types. This cadherin may play an important role in endothelial cell biology through control of the cohesion and organization of the intercellular junctions. It associates with alpha-catenin forming a link to the cytoskeleton. Plays a role in coupling actin fibers to cell junctions in endothelial cells, via acting as a cell junctional complex anchor for AMOTL2 and MAGI1. Acts in concert with KRIT1 and PALS1 to establish and maintain correct endothelial cell polarity and vascular lumen. These effects are mediated by recruitment and activation of the Par polarity complex and RAP1B. Required for activation of PRKCZ and for localization of phosphorylated PRKCZ, PARD3, TIAM1 and RAP1B to the cell junction. Associates with CTNND1/p120-catenin to control CADH5 endocytosis. The protein is Cadherin-5 of Mus musculus (Mouse).